Reading from the N-terminus, the 96-residue chain is Phosphoribosyl-ATP pyrophosphatase (96 aa).

It belongs to the PRA-PH family.

The protein resides in the cytoplasm. The catalysed reaction is 1-(5-phospho-beta-D-ribosyl)-ATP + H2O = 1-(5-phospho-beta-D-ribosyl)-5'-AMP + diphosphate + H(+). It functions in the pathway amino-acid biosynthesis; L-histidine biosynthesis; L-histidine from 5-phospho-alpha-D-ribose 1-diphosphate: step 2/9. In Methanobrevibacter smithii (strain ATCC 35061 / DSM 861 / OCM 144 / PS), this protein is Phosphoribosyl-ATP pyrophosphatase.